Consider the following 228-residue polypeptide: Cytochrome c oxidase subunit 2 (228 aa).

Residues 1–26 are Mitochondrial intermembrane-facing; sequence MATWANLGLQNSSSPLMEQLNFFHDH. The chain crosses the membrane as a helical span at residues 27–48; it reads TVLILIMITVMITYVMGMLFFN. Over 49-62 the chain is Mitochondrial matrix; the sequence is KFTNRYLLHGQTIE. Residues 63-82 form a helical membrane-spanning segment; it reads IIWTILPAIILMFIAFPSLR. Residues 83–228 are Mitochondrial intermembrane-facing; it reads LLYLLDEINS…FIKWVSSQLN (146 aa). His161, Cys196, Glu198, Cys200, His204, and Met207 together coordinate Cu cation. Glu198 provides a ligand contact to Mg(2+).

This sequence belongs to the cytochrome c oxidase subunit 2 family. As to quaternary structure, component of the cytochrome c oxidase (complex IV, CIV), a multisubunit enzyme composed of a catalytic core of 3 subunits and several supernumerary subunits. The complex exists as a monomer or a dimer and forms supercomplexes (SCs) in the inner mitochondrial membrane with ubiquinol-cytochrome c oxidoreductase (cytochrome b-c1 complex, complex III, CIII). Cu cation is required as a cofactor.

The protein localises to the mitochondrion inner membrane. The catalysed reaction is 4 Fe(II)-[cytochrome c] + O2 + 8 H(+)(in) = 4 Fe(III)-[cytochrome c] + 2 H2O + 4 H(+)(out). Functionally, component of the cytochrome c oxidase, the last enzyme in the mitochondrial electron transport chain which drives oxidative phosphorylation. The respiratory chain contains 3 multisubunit complexes succinate dehydrogenase (complex II, CII), ubiquinol-cytochrome c oxidoreductase (cytochrome b-c1 complex, complex III, CIII) and cytochrome c oxidase (complex IV, CIV), that cooperate to transfer electrons derived from NADH and succinate to molecular oxygen, creating an electrochemical gradient over the inner membrane that drives transmembrane transport and the ATP synthase. Cytochrome c oxidase is the component of the respiratory chain that catalyzes the reduction of oxygen to water. Electrons originating from reduced cytochrome c in the intermembrane space (IMS) are transferred via the dinuclear copper A center (CU(A)) of subunit 2 and heme A of subunit 1 to the active site in subunit 1, a binuclear center (BNC) formed by heme A3 and copper B (CU(B)). The BNC reduces molecular oxygen to 2 water molecules using 4 electrons from cytochrome c in the IMS and 4 protons from the mitochondrial matrix. This Culex quinquefasciatus (Southern house mosquito) protein is Cytochrome c oxidase subunit 2 (COII).